We begin with the raw amino-acid sequence, 260 residues long: MKVRTLTAIIALLIFLPILLMGGTTLMLFAYLLALIALKELLNMNMIKLISVPGIFSALALIIIMLPQSAGDWVSNIQLKSLIAMSFILLSYTVLSKNRFSFMDAAFCLMSVAYVGIGFMYFYATRSDGLHYILYAFLVVWLTDTGAYIFGRLMGKHKLWPVISPNKTIEGFIGGLICSLIVPIVMLFFVDFNLNIWLLLLVTIILSIFGQLGDLVESGFKRHFGVKDSGRILPGHGGILDRFDSFMFVLPLLNILLIQM.

Helical transmembrane passes span 9–29 (IIALLIFLPILLMGGTTLMLF), 46–66 (MIKLISVPGIFSALALIIIML), 70–90 (AGDWVSNIQLKSLIAMSFILL), 102–122 (FMDAAFCLMSVAYVGIGFMYF), 130–150 (LHYILYAFLVVWLTDTGAYIF), 172–192 (FIGGLICSLIVPIVMLFFVDF), and 196–216 (IWLLLLVTIILSIFGQLGDLV).

The protein belongs to the CDS family.

The protein resides in the cell membrane. It catalyses the reaction a 1,2-diacyl-sn-glycero-3-phosphate + CTP + H(+) = a CDP-1,2-diacyl-sn-glycerol + diphosphate. It functions in the pathway phospholipid metabolism; CDP-diacylglycerol biosynthesis; CDP-diacylglycerol from sn-glycerol 3-phosphate: step 3/3. In Staphylococcus haemolyticus (strain JCSC1435), this protein is Phosphatidate cytidylyltransferase (cdsA).